Here is a 263-residue protein sequence, read N- to C-terminus: Proliferating cell nuclear antigen (263 aa).

Residues 61 to 80 mediate DNA binding; the sequence is RCDRTINLGLSLANMSKALK.

This sequence belongs to the PCNA family. Homotrimer. Forms a complex with activator 1 heteropentamer in the presence of ATP.

Its subcellular location is the nucleus. Functionally, this protein is an auxiliary protein of DNA polymerase delta and is involved in the control of eukaryotic DNA replication by increasing the polymerase's processibility during elongation of the leading strand. The sequence is that of Proliferating cell nuclear antigen (pcn-1) from Caenorhabditis elegans.